The following is a 463-amino-acid chain: A-type ATP synthase subunit B (463 aa).

This sequence belongs to the ATPase alpha/beta chains family. In terms of assembly, has multiple subunits with at least A(3), B(3), C, D, E, F, H, I and proteolipid K(x).

It is found in the cell membrane. Its function is as follows. Component of the A-type ATP synthase that produces ATP from ADP in the presence of a proton gradient across the membrane. The B chain is a regulatory subunit. The chain is A-type ATP synthase subunit B from Methanothermobacter thermautotrophicus (strain ATCC 29096 / DSM 1053 / JCM 10044 / NBRC 100330 / Delta H) (Methanobacterium thermoautotrophicum).